Here is a 317-residue protein sequence, read N- to C-terminus: Curved DNA-binding protein (317 aa).

Positions 5–69 (DYYKILGVEP…QKRAEFDEIR (65 aa)) constitute a J domain.

It localises to the cytoplasm. Its subcellular location is the nucleoid. In terms of biological role, DNA-binding protein that preferentially recognizes a curved DNA sequence. It is probably a functional analog of DnaJ; displays overlapping activities with DnaJ, but functions under different conditions, probably acting as a molecular chaperone in an adaptive response to environmental stresses other than heat shock. Lacks autonomous chaperone activity; binds native substrates and targets them for recognition by DnaK. Its activity is inhibited by the binding of CbpM. This is Curved DNA-binding protein from Pseudomonas putida (strain W619).